A 67-amino-acid polypeptide reads, in one-letter code: Conotoxin Cl14.2b (67 aa).

The signal sequence occupies residues 1 to 20; that stretch reads MNVTVMFLVLLLLTMPLTDG. The propeptide occupies 21–48; that stretch reads FNIRATNGGELFGPVQRDAGNVLDHGFQ.

Belongs to the conotoxin L superfamily. Contains 2 disulfide bonds. Expressed by the venom duct.

The protein localises to the secreted. In terms of biological role, increases calcium current amplitude through Cav1.2/Cav1.3 channels in rat pancreatic beta-cells, which is a prerequisite for eliciting insulin secretion. Stimulates insulin secretion in NIT-1 insulinoma cell lines. In vivo, significantly decreases mice blood glucose levels as of 45 minutes after treatment, similarly to insulin treatment. Has a potential therapeutic use in endocrinal pathologies such as early stages of type 2 diabetes where the pancreas's capability to produce insulin is still effective. The polypeptide is Conotoxin Cl14.2b (Californiconus californicus (California cone)).